The chain runs to 427 residues: F-box protein At2g16450 (427 aa).

Residues 1–45 (MNPSPITIDLILEILSRLPAKSVRRFHCVSKRWASIFGSPYFKEL) enclose the F-box domain.

The polypeptide is F-box protein At2g16450 (Arabidopsis thaliana (Mouse-ear cress)).